An 85-amino-acid polypeptide reads, in one-letter code: Beta-defensin 18 (85 aa).

An N-terminal signal peptide occupies residues 1–23; that stretch reads MQSTMKMFGIILMVIFSVSCGPS. 3 disulfide bridges follow: cysteine 39–cysteine 65, cysteine 46–cysteine 60, and cysteine 50–cysteine 66.

The protein belongs to the beta-defensin family.

Its subcellular location is the secreted. Its function is as follows. Has antibacterial activity. The sequence is that of Beta-defensin 18 (Defb18) from Mus musculus (Mouse).